The sequence spans 385 residues: 1-deoxy-D-xylulose 5-phosphate reductoisomerase 1 (385 aa).

Residues threonine 11, glycine 12, serine 13, isoleucine 14, asparagine 39, and asparagine 122 each coordinate NADPH. Position 123 (lysine 123) interacts with 1-deoxy-D-xylulose 5-phosphate. Position 124 (glutamate 124) interacts with NADPH. Aspartate 148 contributes to the Mn(2+) binding site. Serine 149, glutamate 150, serine 174, and histidine 197 together coordinate 1-deoxy-D-xylulose 5-phosphate. Residue glutamate 150 coordinates Mn(2+). Position 203 (glycine 203) interacts with NADPH. The 1-deoxy-D-xylulose 5-phosphate site is built by serine 210, asparagine 215, lysine 216, and glutamate 219. A Mn(2+)-binding site is contributed by glutamate 219.

It belongs to the DXR family. The cofactor is Mg(2+). It depends on Mn(2+) as a cofactor.

The catalysed reaction is 2-C-methyl-D-erythritol 4-phosphate + NADP(+) = 1-deoxy-D-xylulose 5-phosphate + NADPH + H(+). The protein operates within isoprenoid biosynthesis; isopentenyl diphosphate biosynthesis via DXP pathway; isopentenyl diphosphate from 1-deoxy-D-xylulose 5-phosphate: step 1/6. In terms of biological role, catalyzes the NADPH-dependent rearrangement and reduction of 1-deoxy-D-xylulose-5-phosphate (DXP) to 2-C-methyl-D-erythritol 4-phosphate (MEP). This Bacillus cereus (strain ATCC 14579 / DSM 31 / CCUG 7414 / JCM 2152 / NBRC 15305 / NCIMB 9373 / NCTC 2599 / NRRL B-3711) protein is 1-deoxy-D-xylulose 5-phosphate reductoisomerase 1.